We begin with the raw amino-acid sequence, 111 residues long: Iron-sulfur cluster assembly protein CyaY (111 aa).

This sequence belongs to the frataxin family.

Its function is as follows. Involved in iron-sulfur (Fe-S) cluster assembly. May act as a regulator of Fe-S biogenesis. The sequence is that of Iron-sulfur cluster assembly protein CyaY from Cupriavidus necator (strain ATCC 17699 / DSM 428 / KCTC 22496 / NCIMB 10442 / H16 / Stanier 337) (Ralstonia eutropha).